The sequence spans 126 residues: Alpha-lactalbumin (126 aa).

Residues 1-126 form the C-type lysozyme domain; it reads RIFQICELSR…CNSDLDQWKC (126 aa). 4 disulfide bridges follow: C6–C126, C30–C117, C63–C82, and C78–C96. The N-linked (GlcNAc...) asparagine glycan is linked to N47. Ca(2+)-binding residues include K84, D87, D89, D92, and D93.

Belongs to the glycosyl hydrolase 22 family. As to quaternary structure, lactose synthase (LS) is a heterodimer of a catalytic component, beta1,4-galactosyltransferase (beta4Gal-T1) and a regulatory component, alpha-lactalbumin (LA). In terms of tissue distribution, mammary gland specific. Secreted in milk.

It localises to the secreted. Functionally, regulatory subunit of lactose synthase, changes the substrate specificity of galactosyltransferase in the mammary gland making glucose a good acceptor substrate for this enzyme. This enables LS to synthesize lactose, the major carbohydrate component of milk. In other tissues, galactosyltransferase transfers galactose onto the N-acetylglucosamine of the oligosaccharide chains in glycoproteins. In Ornithorhynchus anatinus (Duckbill platypus), this protein is Alpha-lactalbumin (LALBA).